The chain runs to 1279 residues: ATP-dependent helicase/nuclease subunit A (1279 aa).

The UvrD-like helicase ATP-binding domain occupies Thr-4–Arg-499. ATP is bound at residue Ala-25–Thr-32. The UvrD-like helicase C-terminal domain occupies Glu-526 to Gly-853.

Belongs to the helicase family. AddA subfamily. As to quaternary structure, heterodimer of AddA and AddB/RexB. Requires Mg(2+) as cofactor.

The enzyme catalyses Couples ATP hydrolysis with the unwinding of duplex DNA by translocating in the 3'-5' direction.. The catalysed reaction is ATP + H2O = ADP + phosphate + H(+). In terms of biological role, the heterodimer acts as both an ATP-dependent DNA helicase and an ATP-dependent, dual-direction single-stranded exonuclease. Recognizes the chi site generating a DNA molecule suitable for the initiation of homologous recombination. The AddA nuclease domain is required for chi fragment generation; this subunit has the helicase and 3' -&gt; 5' nuclease activities. This is ATP-dependent helicase/nuclease subunit A from Clostridium botulinum (strain Okra / Type B1).